The chain runs to 328 residues: Organic solute transporter alpha-like protein (328 aa).

The Extracellular segment spans residues 1 to 44; sequence MNASENYFTMDPTENISQVLDQNRNNTNSLRTHPTVEEYYENMT. N-linked (GlcNAc...) asparagine glycans are attached at residues Asn2, Asn15, Asn25, and Asn42. The helical transmembrane segment at 45 to 65 threads the bilayer; that stretch reads AFLSLAIFIASLLTILNISIF. At 66–84 the chain is on the cytoplasmic side; the sequence is ATTVSRLRRHLDKPLLGPS. The helical transmembrane segment at 85 to 105 threads the bilayer; it reads IMMVGLYPIISVAALVTILVP. Residue Tyr106 is a topological domain, extracellular. A helical membrane pass occupies residues 107-127; that stretch reads SWFICHTVMHVMFMVGGPVFR. At 128-177 the chain is on the cytoplasmic side; sequence TLLFRYVGSEQNYVKETAGEAVQLNTPPCCCCCLCLPMVIPTKAKLCISR. The helical transmembrane segment at 178-198 threads the bilayer; that stretch reads YMVWQMPFWQGSIMLVMNILY. Residues 199-208 lie on the Extracellular side of the membrane; the sequence is YRDIQLYRQV. Residues 209 to 229 traverse the membrane as a helical segment; it reads MFFFIPFIVCSIVLGAWSLQI. Over 230 to 247 the chain is Cytoplasmic; it reads TVRMITKVRGDYQLRKKM. A helical transmembrane segment spans residues 248–265; that stretch reads FCLQLVVMLCKLQYLVLY. The Extracellular portion of the chain corresponds to 266–287; the sequence is DQLDGIKMGGEYPINHTVYKQT. An N-linked (GlcNAc...) asparagine glycan is attached at Asn280. The helical transmembrane segment at 288–308 threads the bilayer; sequence IINILILVEMVLVSMMVQSAY. Residues 309–328 lie on the Cytoplasmic side of the membrane; it reads RTPVQVQIDEVNKEKEVTRI.

Belongs to the OST-alpha family.

The protein localises to the cell membrane. Its function is as follows. Probable transporter. This Drosophila melanogaster (Fruit fly) protein is Organic solute transporter alpha-like protein.